Here is a 369-residue protein sequence, read N- to C-terminus: Chromatin modification-related protein EAF3 (369 aa).

In terms of domain architecture, Tudor-knot spans 9 to 97 (TVYAYHGPLI…WDEWVGIDRI (89 aa)). Disordered regions lie at residues 43 to 66 (PLEE…IAKF) and 126 to 191 (IIVN…NKSK). Basic residues predominate over residues 53 to 62 (NHHHHHHSQH). The span at 126-135 (IIVNATTKNH) shows a compositional bias: low complexity. Residues 136–149 (TNNKNKKESNKRKS) are compositionally biased toward basic residues. Residues 150–191 (SSATTTSGVTAGTNNNKKQKSASTSTTNNTSGNSGTTSNKSK) show a composition bias toward low complexity. The MRG domain occupies 193 to 368 (ILSRLNLNFP…TSPQYDSLAR (176 aa)).

This sequence belongs to the MRG family. Component of the NuA4 histone acetyltransferase complex.

Its subcellular location is the nucleus. Functionally, involved in deacetylation of histones, chromatin assembly and chromosome segregation. May act as a transcriptional oscillator, directing histone deacetylases to specific chromosomal domains. Component of the NuA4 histone acetyltransferase complex which is involved in transcriptional activation of selected genes principally by acetylation of nucleosomal histone H4 and H2A. The NuA4 complex is also involved in DNA repair. The chain is Chromatin modification-related protein EAF3 (EAF3) from Candida albicans (strain SC5314 / ATCC MYA-2876) (Yeast).